Here is a 162-residue protein sequence, read N- to C-terminus: Ribosome maturation factor RimP (162 aa).

This sequence belongs to the RimP family.

It is found in the cytoplasm. Functionally, required for maturation of 30S ribosomal subunits. This is Ribosome maturation factor RimP from Leptospira borgpetersenii serovar Hardjo-bovis (strain JB197).